A 194-amino-acid polypeptide reads, in one-letter code: UPF0301 protein BT_0659 (194 aa).

It belongs to the UPF0301 (AlgH) family.

The protein is UPF0301 protein BT_0659 of Bartonella tribocorum (strain CIP 105476 / IBS 506).